We begin with the raw amino-acid sequence, 173 residues long: Nucleoside-triphosphatase THEP1 (173 aa).

ATP-binding positions include 15-22 (GMPGVGKT) and 101-108 (LKIIDEIG).

This sequence belongs to the THEP1 NTPase family.

It catalyses the reaction a ribonucleoside 5'-triphosphate + H2O = a ribonucleoside 5'-diphosphate + phosphate + H(+). Its function is as follows. Has nucleotide phosphatase activity towards ATP, GTP, CTP, TTP and UTP. May hydrolyze nucleoside diphosphates with lower efficiency. The chain is Nucleoside-triphosphatase THEP1 from Pyrobaculum aerophilum (strain ATCC 51768 / DSM 7523 / JCM 9630 / CIP 104966 / NBRC 100827 / IM2).